Here is a 517-residue protein sequence, read N- to C-terminus: Crotonobetaine/carnitine--CoA ligase (517 aa).

The protein belongs to the ATP-dependent AMP-binding enzyme family.

It carries out the reaction 4-(trimethylamino)butanoate + ATP + CoA = 4-(trimethylamino)butanoyl-CoA + AMP + diphosphate. The catalysed reaction is crotonobetaine + ATP + CoA = crotonobetainyl-CoA + AMP + diphosphate. The enzyme catalyses (R)-carnitine + ATP + CoA = (R)-carnitinyl-CoA + AMP + diphosphate. It participates in amine and polyamine metabolism; carnitine metabolism. Catalyzes the transfer of CoA to carnitine, generating the initial carnitinyl-CoA needed for the CaiB reaction cycle. Also has activity toward crotonobetaine and gamma-butyrobetaine. The polypeptide is Crotonobetaine/carnitine--CoA ligase (Salmonella paratyphi B (strain ATCC BAA-1250 / SPB7)).